We begin with the raw amino-acid sequence, 100 residues long: Urease subunit gamma (100 aa).

The protein belongs to the urease gamma subunit family. Heterotrimer of UreA (gamma), UreB (beta) and UreC (alpha) subunits. Three heterotrimers associate to form the active enzyme.

It is found in the cytoplasm. It catalyses the reaction urea + 2 H2O + H(+) = hydrogencarbonate + 2 NH4(+). It participates in nitrogen metabolism; urea degradation; CO(2) and NH(3) from urea (urease route): step 1/1. This chain is Urease subunit gamma, found in Polaromonas naphthalenivorans (strain CJ2).